A 250-amino-acid chain; its full sequence is FAS1 domain-containing protein AER383W (250 aa).

A signal peptide spans 1–18 (MRLKTILLGFCAFHVARS). An FAS1 domain is found at 87 to 247 (GVTLDDRLQS…GIVLVIDSSL (161 aa)).

It localises to the vacuole. This Eremothecium gossypii (strain ATCC 10895 / CBS 109.51 / FGSC 9923 / NRRL Y-1056) (Yeast) protein is FAS1 domain-containing protein AER383W.